A 412-amino-acid polypeptide reads, in one-letter code: Phosphoglycerate kinase 1 (412 aa).

Substrate contacts are provided by residues 28–30 (DFN), 65–68 (HQGR), Arg-122, and Arg-162. Residues Glu-336 and 361 to 364 (GGHT) each bind ATP.

The protein belongs to the phosphoglycerate kinase family. Monomer.

The protein localises to the cytoplasm. The enzyme catalyses (2R)-3-phosphoglycerate + ATP = (2R)-3-phospho-glyceroyl phosphate + ADP. The protein operates within carbohydrate degradation; glycolysis; pyruvate from D-glyceraldehyde 3-phosphate: step 2/5. The polypeptide is Phosphoglycerate kinase 1 (Methanosarcina acetivorans (strain ATCC 35395 / DSM 2834 / JCM 12185 / C2A)).